Consider the following 463-residue polypeptide: Argininosuccinate lyase (463 aa).

It belongs to the lyase 1 family. Argininosuccinate lyase subfamily.

The protein resides in the cytoplasm. The catalysed reaction is 2-(N(omega)-L-arginino)succinate = fumarate + L-arginine. It participates in amino-acid biosynthesis; L-arginine biosynthesis; L-arginine from L-ornithine and carbamoyl phosphate: step 3/3. This is Argininosuccinate lyase from Prochlorococcus marinus (strain NATL2A).